Consider the following 307-residue polypeptide: MDDFISISLLSLAMLVGCYVAGIIPLAVNFSEERLKLVTVLGAGLLCGTALAVIVPEGVHALYEDILEGKHHQASETHNVIASDKAAEKSVVHEHEHSHDHTQLHAYIGVSLVLGFVFMLLVDQIGNSHVHSTDDPEAARSSNSKITTTLGLVVHAAADGVALGAAASTSQTSVQLIVFVAIMLHKAPAAFGLVSFLMHAGLERNRIRKHLLVFALAAPVMSMVTYLGLSKSSKEALSEVNATGVAMLFSAGTFLYVATVHVLPEVGGIGHSHKPDATGGRGLSRLEVAALVLGCLIPLILSVGHQH.

Residues F4 to I24 traverse the membrane as a helical segment. N-linked (GlcNAc...) asparagine glycosylation occurs at N29. 5 helical membrane passes run L35 to V55, A106 to G126, I146 to A166, L176 to F196, and H210 to S230. N241 carries N-linked (GlcNAc...) asparagine glycosylation. 2 helical membrane-spanning segments follow: residues G244–P264 and L286–Q306.

It belongs to the ZIP transporter (TC 2.A.5) family. In terms of tissue distribution, highly expressed in pancreas, testis, and pituitary and moderately in the kidney, liver, uterus, heart, prostate, and brain, whereas expression is lower in the ovary and colon.

The protein localises to the golgi apparatus. It localises to the trans-Golgi network membrane. Its subcellular location is the cell membrane. The protein resides in the cytoplasm. It is found in the perinuclear region. The protein localises to the mitochondrion. It localises to the nucleus. It catalyses the reaction Zn(2+)(in) = Zn(2+)(out). In terms of biological role, transports zinc ions across cell and organelle membranes into the cytoplasm and regulates intracellular zinc homeostasis. Participates in the zinc ions efflux out of the secretory compartments. Regulates intracellular zinc level, resulting in the enhancement of AKT1 and MAPK3/MAPK1 (Erk1/2) phosphorylation in response to the BCR activation. Also functions as a membrane androgen receptor that mediates, through a G protein, the non-classical androgen signaling pathway, characterized by the activation of MAPK3/MAPK1 (Erk1/2) and transcription factors CREB1 or ATF1. This pathway contributes to CLDN1 and CLDN5 expression and tight junction formation between adjacent Sertoli cells. Mediates androgen-induced vascular endothelial cell proliferation through activation of an inhibitory G protein leading to the AKT1 and MAPK3/MAPK1 (Erk1/2) activation which in turn modulate inhibition (phosphorylation) of GSK3B and CCND1 transcription. Moreover, has dual functions as a membrane-bound androgen receptor and as an androgen-dependent zinc transporter both of which are mediated through an inhibitory G protein (Gi) that mediates both MAP kinase and zinc signaling leading to the androgen-dependent apoptotic process. The sequence is that of Zinc transporter ZIP9 from Homo sapiens (Human).